A 271-amino-acid polypeptide reads, in one-letter code: ATP synthase subunit a (271 aa).

5 helical membrane-spanning segments follow: residues 38–58, 100–120, 146–166, 211–231, and 242–262; these read FWTL…LFLA, VIAP…LMDL, DVNI…FYSI, LFGN…LLPW, and AIFH…LTIV.

This sequence belongs to the ATPase A chain family. In terms of assembly, F-type ATPases have 2 components, CF(1) - the catalytic core - and CF(0) - the membrane proton channel. CF(1) has five subunits: alpha(3), beta(3), gamma(1), delta(1), epsilon(1). CF(0) has three main subunits: a(1), b(2) and c(9-12). The alpha and beta chains form an alternating ring which encloses part of the gamma chain. CF(1) is attached to CF(0) by a central stalk formed by the gamma and epsilon chains, while a peripheral stalk is formed by the delta and b chains.

The protein resides in the cell inner membrane. Key component of the proton channel; it plays a direct role in the translocation of protons across the membrane. The sequence is that of ATP synthase subunit a from Klebsiella pneumoniae (strain 342).